The following is a 1101-amino-acid chain: Lysylphosphatidylglycerol biosynthesis bifunctional protein LysX (1101 aa).

Residues 1-601 (MTATRLVRAH…RLHSDGTAPD (601 aa)) form a phosphatidylglycerol lysyltransferase region. 7 helical membrane passes run 18–38 (VPAA…LASV), 60–80 (FPDT…ALAA), 84–104 (IAWW…VTGL), 113–133 (DVGE…LLLA), 151–171 (VTLV…LELF), 183–200 (YALN…GAFS), and 207–227 (VNAL…VVLF). Positions 602 to 1101 (RIGPVGDGAD…TLPFPLAKPR (500 aa)) are lysine--tRNA ligase. The segment at residues 662-740 (VTVSGRVLRA…SVLVTRWRLI (79 aa)) is a DNA-binding region (OB). Positions 1013 and 1020 each coordinate Mg(2+).

In the N-terminal section; belongs to the LPG synthetase family. It in the C-terminal section; belongs to the class-II aminoacyl-tRNA synthetase family. Mg(2+) serves as cofactor.

The protein localises to the cell membrane. The enzyme catalyses tRNA(Lys) + L-lysine + ATP = L-lysyl-tRNA(Lys) + AMP + diphosphate. It carries out the reaction L-lysyl-tRNA(Lys) + a 1,2-diacyl-sn-glycero-3-phospho-(1'-sn-glycerol) = a 1,2-diacyl-sn-glycero-3-phospho-1'-(3'-O-L-lysyl)-sn-glycerol + tRNA(Lys). Catalyzes the production of L-lysyl-tRNA(Lys)transfer and the transfer of a lysyl group from L-lysyl-tRNA(Lys) to membrane-bound phosphatidylglycerol (PG), which produces lysylphosphatidylglycerol (LPG), one of the components of the bacterial membrane with a positive net charge. LPG synthesis contributes to the resistance to cationic antimicrobial peptides (CAMPs) and likely protects M.tuberculosis against the CAMPs produced by competiting microorganisms (bacteriocins). In fact, the modification of anionic phosphatidylglycerol with positively charged L-lysine results in repulsion of the peptides. The protein is Lysylphosphatidylglycerol biosynthesis bifunctional protein LysX (lysX) of Mycolicibacterium gilvum (strain PYR-GCK) (Mycobacterium gilvum (strain PYR-GCK)).